A 370-amino-acid polypeptide reads, in one-letter code: Death-associated protein kinase 2 (370 aa).

The region spanning 23–285 (YDIGEELGSG…IQEALRHPWI (263 aa)) is the Protein kinase domain. ATP is bound by residues 29–37 (LGSGQFAIV) and K52. D149 functions as the Proton acceptor in the catalytic mechanism. Residues 277 to 344 (QEALRHPWIT…KVHLRPDEDL (68 aa)) form a calmodulin-binding region. The interval 292–301 (QAMVRRESVV) is autoinhibitory domain. S299 carries the phosphoserine modification. At S318 the chain carries Phosphoserine; by autocatalysis. Residues 348–370 (ESDTEEDIARRKALHPRRRSSTS) form a disordered region. S349 is modified (phosphoserine). Residues 358–370 (RKALHPRRRSSTS) show a composition bias toward basic residues. T369 carries the post-translational modification Phosphothreonine; by PKB/AKT1.

This sequence belongs to the protein kinase superfamily. CAMK Ser/Thr protein kinase family. DAP kinase subfamily. As to quaternary structure, homodimer in its autoinhibited state. Active as monomer. Isoform 2 but not isoform 1 can interact with ATF4. Interacts with 14-3-3 proteins YWHAB, YWHAE, YWHAG, YWHAH, YWHAQ, YWHAZ and SFN; the interaction requires DAPK2 phosphorylation at Thr-369 and suppresses DAPK2 kinase activity and DAPK2-induced apoptosis. The cofactor is Mg(2+). Autophosphorylation at Ser-318 inhibits its catalytic activity. Dephosphorylated at Ser-318 in response to activated Fas and TNF-alpha receptors. As to expression, expressed in neutrophils and eosinophils. Isoform 2 is expressed in embryonic stem cells (at protein level). Isoform 1 is ubiquitously expressed in all tissue types examined with high levels in heart, lung and skeletal muscle.

The protein localises to the cytoplasm. It localises to the cytoplasmic vesicle. It is found in the autophagosome lumen. The enzyme catalyses L-seryl-[protein] + ATP = O-phospho-L-seryl-[protein] + ADP + H(+). It carries out the reaction L-threonyl-[protein] + ATP = O-phospho-L-threonyl-[protein] + ADP + H(+). Activated by Ca(2+)/calmodulin. Regulated by a double locking mechanism, involving autophosphorylation at Ser-318, calmodulin binding, and dimerization. In the inactive state, Ser-318 is phosphorylated, and the kinase is dimeric. Activation involves: dephosphorylation at Ser-318, release-of-autoinhibition mechanism where calmodulin binding induces a conformational change that relieves the steric block of the active site by the autoinhibitory domain, and generation of the monomeric active form of the kinase. Functionally, calcium/calmodulin-dependent serine/threonine kinase involved in multiple cellular signaling pathways that trigger cell survival, apoptosis, and autophagy. Regulates both type I apoptotic and type II autophagic cell death signals, depending on the cellular setting. The former is caspase-dependent, while the latter is caspase-independent and is characterized by the accumulation of autophagic vesicles. Acts as a mediator of anoikis and a suppressor of beta-catenin-dependent anchorage-independent growth of malignant epithelial cells. May play a role in granulocytic maturation. Regulates granulocytic motility by controlling cell spreading and polarization. In terms of biological role, isoform 2 is not regulated by calmodulin. It can phosphorylate MYL9. It can induce membrane blebbing and autophagic cell death. This Homo sapiens (Human) protein is Death-associated protein kinase 2 (DAPK2).